The primary structure comprises 309 residues: Shugoshin (309 aa).

A coiled-coil region spans residues 42–77 (NLLLKQQVVQCTKTIEKLRNENVALRQKNQELIDGT). 2 disordered regions span residues 165–195 (FDNN…KGRR) and 210–309 (EEAS…NTFF). Residues 167 to 178 (NNSSQSTSSIQN) are compositionally biased toward low complexity. A compositionally biased stretch (basic residues) spans 184–193 (PRKKQSVGKG).

It belongs to the shugoshin family. Expressed in gonads.

Its subcellular location is the nucleus. It localises to the chromosome. The protein localises to the centromere. In terms of biological role, component of cell cycle checkpoints, which ensures chromosome segregation during meiosis and mitosis. During meiotic prophase, it is involved in the regulation of the synapsis checkpoint, which monitors whether homologous chromosomes have synapsed, and the DNA damage response. Plays a central role in chromosome cohesion during cell division by preventing premature dissociation of cohesin complex after prophase, when most of cohesin complex dissociates from chromosomes arms. The protein is Shugoshin of Caenorhabditis elegans.